The chain runs to 307 residues: UPF0749 protein MT1871 (307 aa).

The N-terminal stretch at 1-23 (MAESDRLLGGYDPNAGYSAHAGA) is a signal peptide. The next 2 helical transmembrane spans lie at 67–87 (VSWM…AAAV) and 152–172 (VLSL…VTVT).

Belongs to the UPF0749 family.

The protein localises to the cell membrane. The polypeptide is UPF0749 protein MT1871 (Mycobacterium tuberculosis (strain CDC 1551 / Oshkosh)).